We begin with the raw amino-acid sequence, 146 residues long: D-aminoacyl-tRNA deacylase (146 aa).

A Gly-cisPro motif, important for rejection of L-amino acids motif is present at residues 137-138 (GP).

It belongs to the DTD family. As to quaternary structure, homodimer.

It is found in the cytoplasm. The enzyme catalyses glycyl-tRNA(Ala) + H2O = tRNA(Ala) + glycine + H(+). It catalyses the reaction a D-aminoacyl-tRNA + H2O = a tRNA + a D-alpha-amino acid + H(+). In terms of biological role, an aminoacyl-tRNA editing enzyme that deacylates mischarged D-aminoacyl-tRNAs. Also deacylates mischarged glycyl-tRNA(Ala), protecting cells against glycine mischarging by AlaRS. Acts via tRNA-based rather than protein-based catalysis; rejects L-amino acids rather than detecting D-amino acids in the active site. By recycling D-aminoacyl-tRNA to D-amino acids and free tRNA molecules, this enzyme counteracts the toxicity associated with the formation of D-aminoacyl-tRNA entities in vivo and helps enforce protein L-homochirality. The protein is D-aminoacyl-tRNA deacylase of Bacillus thuringiensis subsp. konkukian (strain 97-27).